We begin with the raw amino-acid sequence, 360 residues long: MATAETFYDVIRRQGITRRSFTKFCSLTAASLGFGPGAATAMAEALETKERVPVIWMHGLECTCCSESFIRSAHPLVKDVVLSMISLDYDDTIMAAAGHQAESILAETKEKYKGKYILAVEGNPPLNEGGMFCIDGGKPFVEKLKWMAEDAMAIIAWGACASWGCVQAAKPNPTQATPIDKVILDKPIIKVPGCPPIAEVMTGVVTFITTFGKLPELDRQGRPKMFYSQRIHDKCYRRPHFDAGQFVEEWDDEGARKGYCLYKMGCKGPTTYNACSTVRWNGGVSFPIQSGHGCIGCSEDGFWDNGSFYDRLTNIHQFGIEANADKVGMTAAGVVGGAIAAHAAVTAVKRLTTKREKADA.

The tat-type signal signal peptide spans 1–46 (MATAETFYDVIRRQGITRRSFTKFCSLTAASLGFGPGAATAMAEAL). [4Fe-4S] cluster contacts are provided by C62, C65, C160, C194, H232, C235, C260, and C266. Positions 275, 294, and 297 each coordinate [3Fe-4S] cluster.

The protein belongs to the [NiFe]/[NiFeSe] hydrogenase small subunit family. Heterodimer of a large and a small subunit. [4Fe-4S] cluster is required as a cofactor. It depends on [3Fe-4S] cluster as a cofactor. In terms of processing, predicted to be exported by the Tat system. The position of the signal peptide cleavage has not been experimentally proven.

The protein localises to the cell membrane. It catalyses the reaction H2 + A = AH2. This enzyme recycles the H(2) produced by nitrogenase to increase the production of ATP and to protect nitrogenase against inhibition or damage by O(2) under carbon- or phosphate-limited conditions. The sequence is that of Uptake hydrogenase small subunit (hupA) from Rhizobium leguminosarum bv. viciae.